Reading from the N-terminus, the 356-residue chain is Histidinol-phosphate aminotransferase (356 aa).

N6-(pyridoxal phosphate)lysine is present on Lys-214.

This sequence belongs to the class-II pyridoxal-phosphate-dependent aminotransferase family. Histidinol-phosphate aminotransferase subfamily. As to quaternary structure, homodimer. The cofactor is pyridoxal 5'-phosphate.

It carries out the reaction L-histidinol phosphate + 2-oxoglutarate = 3-(imidazol-4-yl)-2-oxopropyl phosphate + L-glutamate. Its pathway is amino-acid biosynthesis; L-histidine biosynthesis; L-histidine from 5-phospho-alpha-D-ribose 1-diphosphate: step 7/9. This Escherichia coli O9:H4 (strain HS) protein is Histidinol-phosphate aminotransferase.